A 288-amino-acid polypeptide reads, in one-letter code: Pyridoxal kinase PdxY (288 aa).

Substrate-binding positions include serine 12 and 47–48 (TQ). Residues aspartate 114, glutamate 151, lysine 184, and 211-214 (RPLL) each bind ATP. Residue aspartate 225 participates in substrate binding.

It belongs to the pyridoxine kinase family. PdxY subfamily. Homodimer. It depends on Mg(2+) as a cofactor.

It carries out the reaction pyridoxal + ATP = pyridoxal 5'-phosphate + ADP + H(+). It functions in the pathway cofactor metabolism; pyridoxal 5'-phosphate salvage; pyridoxal 5'-phosphate from pyridoxal: step 1/1. Pyridoxal kinase involved in the salvage pathway of pyridoxal 5'-phosphate (PLP). Catalyzes the phosphorylation of pyridoxal to PLP. This chain is Pyridoxal kinase PdxY, found in Pseudomonas syringae pv. tomato (strain ATCC BAA-871 / DC3000).